Here is a 673-residue protein sequence, read N- to C-terminus: UvrABC system protein B (673 aa).

Positions 26–414 (EGLEDGLAHQ…GDEVVDQVVR (389 aa)) constitute a Helicase ATP-binding domain. Residue 39-46 (GVTGSGKT) participates in ATP binding. Positions 92 to 115 (YYDYYQPEAYVPSSDTFIEKDASV) match the Beta-hairpin motif. The region spanning 431 to 597 (QVDDLLSEIR…GLNKKVVDIL (167 aa)) is the Helicase C-terminal domain. The region spanning 633–668 (QQKIHELEEQMMQHAQNLEFEEAAQIRDQLHQLREL) is the UVR domain.

This sequence belongs to the UvrB family. Forms a heterotetramer with UvrA during the search for lesions. Interacts with UvrC in an incision complex.

It localises to the cytoplasm. The UvrABC repair system catalyzes the recognition and processing of DNA lesions. A damage recognition complex composed of 2 UvrA and 2 UvrB subunits scans DNA for abnormalities. Upon binding of the UvrA(2)B(2) complex to a putative damaged site, the DNA wraps around one UvrB monomer. DNA wrap is dependent on ATP binding by UvrB and probably causes local melting of the DNA helix, facilitating insertion of UvrB beta-hairpin between the DNA strands. Then UvrB probes one DNA strand for the presence of a lesion. If a lesion is found the UvrA subunits dissociate and the UvrB-DNA preincision complex is formed. This complex is subsequently bound by UvrC and the second UvrB is released. If no lesion is found, the DNA wraps around the other UvrB subunit that will check the other stand for damage. The polypeptide is UvrABC system protein B (Salmonella typhi).